We begin with the raw amino-acid sequence, 494 residues long: MVLGTSSGAGKSLMTAALCRVLKRRGETPLPFKGQNMSNNAWVDPGGGEMAYSQALQAWAAGREPECAMNPVLLKPQGDSTSEVIHLGRSVGTCRAEHYYRDWFRPGWAAIRQGLHTLENENPEGRLVLEGAGSPVEVNLQARDLTNLRLAQYLRARCLLVADIERGGVFAQIVGTLALLRPVERPLISGLLINRFRGRRELFDEGRRWLEQHTGIPVLGVMPWLDELFPPEDSLDLLERRGRKRGAELEIAVLKLPSLSNFSDLDPLEAEPTVQLRWVAPGEPLGTPDAVVIPGSKQTLRDLGRLHSSGLGSAVQRFARSGGAVFGVCGGMQMLGQELEDPEGLEGQAAAGGNGAMTGLGLLPLRTRFGGEKALRHRQSSVHWPEHQPTLSVEGFELHRGHTHALEPCSNLCEDPSLGWVARCGDQGGIAAGTYLHGIFDNGPWRRRWLNQLRIRRGLELLSEQQPHHSRQRDALLDRLADAFETHVNLEPLL.

The GATase cobBQ-type domain occupies 248–445; sequence ELEIAVLKLP…LHGIFDNGPW (198 aa). Residue C329 is the Nucleophile of the active site. H437 is an active-site residue.

It belongs to the CobB/CobQ family. CobQ subfamily.

It participates in cofactor biosynthesis; adenosylcobalamin biosynthesis. Functionally, catalyzes amidations at positions B, D, E, and G on adenosylcobyrinic A,C-diamide. NH(2) groups are provided by glutamine, and one molecule of ATP is hydrogenolyzed for each amidation. The sequence is that of Cobyric acid synthase from Synechococcus sp. (strain WH7803).